Consider the following 739-residue polypeptide: Gamma-tubulin complex component 4 homolog (739 aa).

Belongs to the TUBGCP family.

Its subcellular location is the cytoplasm. The protein localises to the cytoskeleton. It is found in the microtubule organizing center. Its function is as follows. Gamma-tubulin complex is necessary for microtubule nucleation at the microtubule organizing centers (MTOCs). This Medicago truncatula (Barrel medic) protein is Gamma-tubulin complex component 4 homolog (85P).